We begin with the raw amino-acid sequence, 208 residues long: Large ribosomal subunit protein uL4 (208 aa).

Residues 44 to 89 form a disordered region; that stretch reads RRQGTHKAKNRSEVRGGGRKPYRQKGTGHARQGSTRSPLMTGGGTI. Residues 60–71 are compositionally biased toward basic residues; the sequence is GGRKPYRQKGTG.

Belongs to the universal ribosomal protein uL4 family. As to quaternary structure, part of the 50S ribosomal subunit.

One of the primary rRNA binding proteins, this protein initially binds near the 5'-end of the 23S rRNA. It is important during the early stages of 50S assembly. It makes multiple contacts with different domains of the 23S rRNA in the assembled 50S subunit and ribosome. Functionally, forms part of the polypeptide exit tunnel. This Chlorobium phaeobacteroides (strain BS1) protein is Large ribosomal subunit protein uL4.